Here is a 295-residue protein sequence, read N- to C-terminus: Urease accessory protein UreD (295 aa).

The protein belongs to the UreD family. In terms of assembly, ureD, UreF and UreG form a complex that acts as a GTP-hydrolysis-dependent molecular chaperone, activating the urease apoprotein by helping to assemble the nickel containing metallocenter of UreC. The UreE protein probably delivers the nickel.

The protein localises to the cytoplasm. In terms of biological role, required for maturation of urease via the functional incorporation of the urease nickel metallocenter. This Saccharophagus degradans (strain 2-40 / ATCC 43961 / DSM 17024) protein is Urease accessory protein UreD.